A 92-amino-acid polypeptide reads, in one-letter code: Small ribosomal subunit protein uS19c (92 aa).

The protein belongs to the universal ribosomal protein uS19 family.

Its subcellular location is the plastid. It is found in the chloroplast. Protein S19 forms a complex with S13 that binds strongly to the 16S ribosomal RNA. In Spirogyra maxima (Green alga), this protein is Small ribosomal subunit protein uS19c.